The primary structure comprises 173 residues: Crossover junction endodeoxyribonuclease RuvC (173 aa).

Catalysis depends on residues Asp-8, Glu-67, and Asp-139. 3 residues coordinate Mg(2+): Asp-8, Glu-67, and Asp-139.

It belongs to the RuvC family. In terms of assembly, homodimer which binds Holliday junction (HJ) DNA. The HJ becomes 2-fold symmetrical on binding to RuvC with unstacked arms; it has a different conformation from HJ DNA in complex with RuvA. In the full resolvosome a probable DNA-RuvA(4)-RuvB(12)-RuvC(2) complex forms which resolves the HJ. Mg(2+) serves as cofactor.

It is found in the cytoplasm. It carries out the reaction Endonucleolytic cleavage at a junction such as a reciprocal single-stranded crossover between two homologous DNA duplexes (Holliday junction).. Its function is as follows. The RuvA-RuvB-RuvC complex processes Holliday junction (HJ) DNA during genetic recombination and DNA repair. Endonuclease that resolves HJ intermediates. Cleaves cruciform DNA by making single-stranded nicks across the HJ at symmetrical positions within the homologous arms, yielding a 5'-phosphate and a 3'-hydroxyl group; requires a central core of homology in the junction. The consensus cleavage sequence is 5'-(A/T)TT(C/G)-3'. Cleavage occurs on the 3'-side of the TT dinucleotide at the point of strand exchange. HJ branch migration catalyzed by RuvA-RuvB allows RuvC to scan DNA until it finds its consensus sequence, where it cleaves and resolves the cruciform DNA. The polypeptide is Crossover junction endodeoxyribonuclease RuvC (Psychromonas ingrahamii (strain DSM 17664 / CCUG 51855 / 37)).